The following is a 215-amino-acid chain: LysM and putative peptidoglycan-binding domain-containing protein 2 (215 aa).

The disordered stretch occupies residues 1-40; that stretch reads MADLSPAPALREGGPRAHRPSAPSPPPRSRSTSEPEEAEL. Alanine 2 is subject to N-acetylalanine. Serine 5, serine 24, serine 33, and serine 57 each carry phosphoserine. One can recognise a LysM domain in the interval 71-115; the sequence is VEHRVRAGDTLQGIALKYGVTMEQIKRANKLFTNDCIFLKKTLSI. Disordered stretches follow at residues 135–176 and 195–215; these read ESET…EVSA and RKLK…LYHS. Acidic residues predominate over residues 145–156; that stretch reads QEEEPVVSEEEL. The span at 157–169 shows a compositional bias: pro residues; that stretch reads PPPSPQDPDPKPA. Residues 196-205 show a composition bias toward basic and acidic residues; the sequence is KLKEESRDEE.

The protein is LysM and putative peptidoglycan-binding domain-containing protein 2 (Lysmd2) of Mus musculus (Mouse).